Reading from the N-terminus, the 180-residue chain is Crossover junction endodeoxyribonuclease RuvC (180 aa).

Residues D7, E66, and D138 contribute to the active site. Mg(2+) contacts are provided by D7, E66, and D138.

Belongs to the RuvC family. As to quaternary structure, homodimer which binds Holliday junction (HJ) DNA. The HJ becomes 2-fold symmetrical on binding to RuvC with unstacked arms; it has a different conformation from HJ DNA in complex with RuvA. In the full resolvosome a probable DNA-RuvA(4)-RuvB(12)-RuvC(2) complex forms which resolves the HJ. It depends on Mg(2+) as a cofactor.

It localises to the cytoplasm. It carries out the reaction Endonucleolytic cleavage at a junction such as a reciprocal single-stranded crossover between two homologous DNA duplexes (Holliday junction).. The RuvA-RuvB-RuvC complex processes Holliday junction (HJ) DNA during genetic recombination and DNA repair. Endonuclease that resolves HJ intermediates. Cleaves cruciform DNA by making single-stranded nicks across the HJ at symmetrical positions within the homologous arms, yielding a 5'-phosphate and a 3'-hydroxyl group; requires a central core of homology in the junction. The consensus cleavage sequence is 5'-(A/T)TT(C/G)-3'. Cleavage occurs on the 3'-side of the TT dinucleotide at the point of strand exchange. HJ branch migration catalyzed by RuvA-RuvB allows RuvC to scan DNA until it finds its consensus sequence, where it cleaves and resolves the cruciform DNA. The chain is Crossover junction endodeoxyribonuclease RuvC from Burkholderia thailandensis (strain ATCC 700388 / DSM 13276 / CCUG 48851 / CIP 106301 / E264).